The following is a 323-amino-acid chain: MRTIKIIQTASQLPEKIVSNDDLAGMMDTSDEWIRSRTGIFKRHIAVDETTASLAASVLQKLLKGSGISADQIDFVLVATMSPDSMAPSTAAQASALAGLSNAFAMDINVACSGFVYGLTLAHGLVNTLGSHYGVVIGAETLSKLVDWQERSTAVLFGDGAAGVLVEAVDGPERLLAADLKTFGKEAKSLTAGHLWSSTTWNQPEKGSRYFQMDGHAVYSFATRQVAASIKRTFEKISADIGDTDYFLLHQANQRIIDKVADLLKQPADRFLSNLSKYGNTSAASIPLLLDEMVTGNIVKSGQLLTLSGFGAGLSVGSIVYKY.

Residues Cys-112 and His-250 contribute to the active site. Residues 251 to 255 (QANQR) are ACP-binding. Asn-280 is a catalytic residue.

This sequence belongs to the thiolase-like superfamily. FabH family. Homodimer.

Its subcellular location is the cytoplasm. The catalysed reaction is malonyl-[ACP] + acetyl-CoA + H(+) = 3-oxobutanoyl-[ACP] + CO2 + CoA. Its pathway is lipid metabolism; fatty acid biosynthesis. In terms of biological role, catalyzes the condensation reaction of fatty acid synthesis by the addition to an acyl acceptor of two carbons from malonyl-ACP. Catalyzes the first condensation reaction which initiates fatty acid synthesis and may therefore play a role in governing the total rate of fatty acid production. Possesses both acetoacetyl-ACP synthase and acetyl transacylase activities. Its substrate specificity determines the biosynthesis of branched-chain and/or straight-chain of fatty acids. This is Beta-ketoacyl-[acyl-carrier-protein] synthase III from Oenococcus oeni (strain ATCC BAA-331 / PSU-1).